The primary structure comprises 362 residues: Snurportin-1 (362 aa).

N-acetylmethionine is present on methionine 1. 2 disordered regions span residues 1–40 (MEEL…SLEQ) and 69–90 (DWTG…MDVD). A necessary for interaction with KPNB1 and m3G-cap U1 and U5 snRNP import receptor activity region spans residues 1-65 (MEELSQALAG…LDYVNHARRL (65 aa)). The necessary for interaction with XPO1 stretch occupies residues 1–160 (MEELSQALAG…NTFPSLLPGG (160 aa)). Positions 11 to 73 (SFSVSQDLNS…RLAEDDWTGM (63 aa)) constitute an IBB domain. The span at 12–22 (FSVSQDLNSTA) shows a compositional bias: polar residues. Residues 69-89 (DWTGMESEEEEEKKDDEEMDV) are compositionally biased toward acidic residues. Serine 75 carries the phosphoserine modification. Residues 128 to 130 (GKR) form an interaction with m3G-cap structure region. Residues 210 to 330 (LHSKLPEEEG…GIMGKLTPRA (121 aa)) are necessary for binding to the m3G-cap structure. The disordered stretch occupies residues 319–362 (KEGIMGKLTPRASENGHYELEHLSTPKLKSPPQRPNHPESLMEN). A compositionally biased stretch (basic and acidic residues) spans 332–342 (ENGHYELEHLS).

This sequence belongs to the snurportin family. As to quaternary structure, component of an import snRNP complex composed of KPNB1, SNUPN, SMN1 and ZNF259. Component of a nuclear export receptor complex composed of KPNB1, Ran, SNUPN and XPO1. Found in a trimeric export complex with SNUPN, Ran and XPO1. Interacts (via IBB domain) with KPNB1; the interaction is direct. Interacts with DDX20, IPO7, SMN1, SNRPB and XPO1. Interacts directly with XPO1. Its interaction with XPO1 and binding to m3G-cap U snRNPs appears to be mutually exclusive. Can form homomers.

It is found in the nucleus. It localises to the cytoplasm. Functions as an U snRNP-specific nuclear import adapter. Involved in the trimethylguanosine (m3G)-cap-dependent nuclear import of U snRNPs. Binds specifically to the terminal m3G-cap U snRNAs. The polypeptide is Snurportin-1 (SNUPN) (Bos taurus (Bovine)).